The sequence spans 501 residues: MLO-like protein 5 (501 aa).

The Extracellular segment spans residues Met1–Thr22. Residues Trp23–Ile43 traverse the membrane as a helical segment. Topologically, residues His44–Glu68 are cytoplasmic. Residues Leu69–Leu89 form a helical membrane-spanning segment. The Extracellular segment spans residues Cys90–His151. Residues Ile152–Gly172 traverse the membrane as a helical segment. Residues Arg173–Lys273 lie on the Cytoplasmic side of the membrane. The helical transmembrane segment at Val274 to Val294 threads the bilayer. His295 is a topological domain (extracellular). A helical membrane pass occupies residues Gly296 to Thr316. Over Lys317–His359 the chain is Cytoplasmic. The helical transmembrane segment at Ile360 to Tyr380 threads the bilayer. Residues Glu381–His391 are Extracellular-facing. Residues Phe392–Ile412 traverse the membrane as a helical segment. Over Thr413 to Pro501 the chain is Cytoplasmic. Positions Trp443 to Pro501 are disordered. The calmodulin-binding stretch occupies residues Lys450 to Asp471. Over residues Gln491–Pro501 the composition is skewed to polar residues.

It belongs to the MLO family.

The protein localises to the membrane. Functionally, may be involved in modulation of pathogen defense and leaf cell death. Activity seems to be regulated by Ca(2+)-dependent calmodulin binding and seems not to require heterotrimeric G proteins. The chain is MLO-like protein 5 (MLO5) from Arabidopsis thaliana (Mouse-ear cress).